Consider the following 868-residue polypeptide: Leucine--tRNA ligase (868 aa).

A 'HIGH' region motif is present at residues 42 to 52 (PYPSGKLHMGH). A 'KMSKS' region motif is present at residues 624 to 628 (TMSKS). Lysine 627 is an ATP binding site.

The protein belongs to the class-I aminoacyl-tRNA synthetase family.

It is found in the cytoplasm. The enzyme catalyses tRNA(Leu) + L-leucine + ATP = L-leucyl-tRNA(Leu) + AMP + diphosphate. This is Leucine--tRNA ligase from Nitrosomonas eutropha (strain DSM 101675 / C91 / Nm57).